Reading from the N-terminus, the 178-residue chain is Extracellular fatty acid-binding protein (178 aa).

The first 20 residues, 1–20, serve as a signal peptide directing secretion; that stretch reads MRTLALSLALALLCLLHTEA. Ala21 carries the blocked amino end (Ala) modification. Thr43 is an enterobactin binding site. Tyr72 and Lys104 together coordinate 1-tetradecanoyl-sn-glycerol 3-phosphate. Cys80 and Cys173 form a disulfide bridge. Enterobactin-binding residues include Lys104, Arg123, and Arg134. Residue 134-136 coordinates 1-tetradecanoyl-sn-glycerol 3-phosphate; that stretch reads RLY.

This sequence belongs to the calycin superfamily. Lipocalin family. As to quaternary structure, monomer. In terms of processing, does not seem to be glycosylated. As to expression, expressed in egg white (at protein level). Expressed in the magnum of the oviduct (at protein level). Preferentially synthesized in nonproliferating cells.

It localises to the secreted. Functionally, siderocalin-like lipocalin tightly binding a variety of bacterial ferric siderophores, also binds long-chain unsaturated fatty acids such as linoleic acid, oleic acid, arachidonic acid and, with a lower affinity, long chain saturated fatty acids such as steraic acid. May act as an antibacterial factor, through dual ligand specificity, both as a siderophore-sequestrating molecule and a lysophosphatidic acid (LPA) sensor. This chain is Extracellular fatty acid-binding protein (EXFABP), found in Gallus gallus (Chicken).